We begin with the raw amino-acid sequence, 382 residues long: Mannitol-1-phosphate 5-dehydrogenase (382 aa).

Residue 3-14 participates in NAD(+) binding; the sequence is ALHFGAGNIGRG.

It belongs to the mannitol dehydrogenase family.

The catalysed reaction is D-mannitol 1-phosphate + NAD(+) = beta-D-fructose 6-phosphate + NADH + H(+). This Pectobacterium atrosepticum (strain SCRI 1043 / ATCC BAA-672) (Erwinia carotovora subsp. atroseptica) protein is Mannitol-1-phosphate 5-dehydrogenase.